Consider the following 256-residue polypeptide: UPF0246 protein Bpet1601 (256 aa).

It belongs to the UPF0246 family.

This Bordetella petrii (strain ATCC BAA-461 / DSM 12804 / CCUG 43448) protein is UPF0246 protein Bpet1601.